Here is a 52-residue protein sequence, read N- to C-terminus: Light-harvesting protein B800/830/1020 alpha-1 chain (52 aa).

At 1–12 the chain is on the cytoplasmic side; sequence MWRIWKVFDPRR. A helical membrane pass occupies residues 13–33; the sequence is ILIATAIWLIIIALTIHVILM. Residue His29 participates in a bacteriochlorophyll binding. At 34–52 the chain is on the periplasmic side; that stretch reads TTERFNWLEGAPAAEYYSS.

Belongs to the antenna complex alpha subunit family. The core complex is formed by different alpha and beta chains, binding bacteriochlorophyll molecules, and arranged most probably in tetrameric structures disposed around the reaction center. The non-pigmented gamma chains may constitute additional components.

The protein resides in the cell inner membrane. Functionally, antenna complexes are light-harvesting systems, which transfer the excitation energy to the reaction centers. The polypeptide is Light-harvesting protein B800/830/1020 alpha-1 chain (Halorhodospira halochloris (Ectothiorhodospira halochloris)).